Reading from the N-terminus, the 338-residue chain is MSARSIHIVDTTLRDGSHAVSHQFTAEQIAAIAGGLDAAGVEYIEVSHGDGLAGSSYNYGWAALGDEEMLKAASAAIKKGKLTVLLLPGIGTVEDLKMAADCGAKVVRVATHVTEADIGEQHIGMAKKLGMMAVGFLMMCHMAPPEKVVEQAKLFESYGADYINIADSAGAMLPEDVKARVGAVVEAVKVPVGFHAHNNLTMATANALAAVEAGATFLDGACRGLGAGAGNAQTEALVGVLDKLGYRTGVDFYKVMDVAEDIVEPIMHRPQVVRNAPLMLGYAGVYSSFLLHTYRAAEKFNLDPRDILVELGRRRMVGGQEDMIVDVAYQLAQKRGGN.

The region spanning 6–256 (IHIVDTTLRD…RTGVDFYKVM (251 aa)) is the Pyruvate carboxyltransferase domain. Residue 14–15 (RD) participates in substrate binding. Aspartate 15 contributes to the Mn(2+) binding site. Histidine 18 acts as the Proton acceptor in catalysis. Substrate contacts are provided by serine 168 and histidine 195. Histidine 195 and histidine 197 together coordinate Mn(2+). Tyrosine 286 provides a ligand contact to substrate.

It belongs to the 4-hydroxy-2-oxovalerate aldolase family.

The enzyme catalyses (S)-4-hydroxy-2-oxopentanoate = acetaldehyde + pyruvate. In Moorella thermoacetica (strain ATCC 39073 / JCM 9320), this protein is 4-hydroxy-2-oxovalerate aldolase.